A 374-amino-acid chain; its full sequence is Ribonuclease D (374 aa).

Residues 6–171 (IISTTEDLKK…RATRVILLSK (166 aa)) enclose the 3'-5' exonuclease domain. The HRDC domain occupies 213–292 (DRKSIGVAQE…ARALNKKEVD (80 aa)).

It belongs to the RNase D family. A divalent metal cation serves as cofactor.

The protein localises to the cytoplasm. It carries out the reaction Exonucleolytic cleavage that removes extra residues from the 3'-terminus of tRNA to produce 5'-mononucleotides.. Exonuclease involved in the 3' processing of various precursor tRNAs. Initiates hydrolysis at the 3'-terminus of an RNA molecule and releases 5'-mononucleotides. The sequence is that of Ribonuclease D from Desulfotalea psychrophila (strain LSv54 / DSM 12343).